The sequence spans 158 residues: MQGNLSAWLVKHALIHRSLGFDYQGIETLQIKPGDWHSIAVILYVYGYNYLRSQCAYDVAPGGLLASVYHLTRIEYGVDQPEEVCIKVFAPRKDPRIPSVFWVWKSVDFQERESYDMLGISYDNHPRLKRILMPESWIGWPLRKDYIAPNFYEIQDAH.

This sequence belongs to the complex I 30 kDa subunit family. As to quaternary structure, NDH is composed of at least 16 different subunits, 5 of which are encoded in the nucleus.

The protein resides in the plastid. It localises to the chloroplast thylakoid membrane. It carries out the reaction a plastoquinone + NADH + (n+1) H(+)(in) = a plastoquinol + NAD(+) + n H(+)(out). The enzyme catalyses a plastoquinone + NADPH + (n+1) H(+)(in) = a plastoquinol + NADP(+) + n H(+)(out). Its function is as follows. NDH shuttles electrons from NAD(P)H:plastoquinone, via FMN and iron-sulfur (Fe-S) centers, to quinones in the photosynthetic chain and possibly in a chloroplast respiratory chain. The immediate electron acceptor for the enzyme in this species is believed to be plastoquinone. Couples the redox reaction to proton translocation, and thus conserves the redox energy in a proton gradient. In Helianthus annuus (Common sunflower), this protein is NAD(P)H-quinone oxidoreductase subunit J, chloroplastic.